Consider the following 652-residue polypeptide: Probable L-type lectin-domain containing receptor kinase S.5 (652 aa).

An N-terminal signal peptide occupies residues 1-20 (MRFSLAWKLLFLILTCKIET). Over 21–266 (QVKCLKFDFP…EGLKIDGDGN (246 aa)) the chain is Extracellular. The segment at 24–257 (CLKFDFPGFN…LNCVRSWSFE (234 aa)) is legume-lectin like. N-linked (GlcNAc...) asparagine glycosylation is found at N33, N91, N97, N100, N122, N139, N201, and N244. Residues 267 to 287 (MLWLWITIPIVFIVGIGAFLG) traverse the membrane as a helical segment. Residues 288–652 (ALYLRSRSKA…INSLTELTGR (365 aa)) lie on the Cytoplasmic side of the membrane. The Protein kinase domain occupies 330-622 (FGAENKLGQG…PDVPTERPAF (293 aa)). ATP contacts are provided by residues 336–344 (LGQGGFGMV) and K357. The Proton acceptor role is filled by D455.

The protein in the C-terminal section; belongs to the protein kinase superfamily. Ser/Thr protein kinase family. This sequence in the N-terminal section; belongs to the leguminous lectin family.

The protein localises to the cell membrane. It catalyses the reaction L-seryl-[protein] + ATP = O-phospho-L-seryl-[protein] + ADP + H(+). The enzyme catalyses L-threonyl-[protein] + ATP = O-phospho-L-threonyl-[protein] + ADP + H(+). The chain is Probable L-type lectin-domain containing receptor kinase S.5 (LECRKS5) from Arabidopsis thaliana (Mouse-ear cress).